Here is a 252-residue protein sequence, read N- to C-terminus: Nicotinamide/nicotinic acid mononucleotide adenylyltransferase 3 (252 aa).

Residues serine 14 and phenylalanine 15 each coordinate NAD(+). Residues histidine 22 and lysine 56 each coordinate ATP. NAD(+)-binding residues include tryptophan 90, threonine 93, glycine 135, and aspartate 137. Residue lysine 140 participates in ATP binding. NAD(+) contacts are provided by leucine 147, tryptophan 148, arginine 167, and asparagine 198. Threonine 203–arginine 206 lines the ATP pocket.

This sequence belongs to the eukaryotic NMN adenylyltransferase family. In terms of assembly, homotetramer. Mg(2+) serves as cofactor. As to expression, expressed in lung and spleen with lower levels in placenta and kidney.

It localises to the mitochondrion. It carries out the reaction beta-nicotinamide D-ribonucleotide + ATP + H(+) = diphosphate + NAD(+). It catalyses the reaction nicotinate beta-D-ribonucleotide + ATP + H(+) = deamido-NAD(+) + diphosphate. It functions in the pathway cofactor biosynthesis; NAD(+) biosynthesis; NAD(+) from nicotinamide D-ribonucleotide: step 1/1. Its pathway is cofactor biosynthesis; NAD(+) biosynthesis; deamido-NAD(+) from nicotinate D-ribonucleotide: step 1/1. Activity is strongly inhibited by galotannin. Inhibited by P1-(adenosine-5')-P4-(nicotinic-acid-riboside-5')-tetraphosphate (Nap4AD). Its function is as follows. Catalyzes the formation of NAD(+) from nicotinamide mononucleotide (NMN) and ATP. Can also use the deamidated form; nicotinic acid mononucleotide (NaMN) as substrate with the same efficiency. Can use triazofurin monophosphate (TrMP) as substrate. Can also use GTP and ITP as nucleotide donors. Also catalyzes the reverse reaction, i.e. the pyrophosphorolytic cleavage of NAD(+). For the pyrophosphorolytic activity, can use NAD(+), NADH, NaAD, nicotinic acid adenine dinucleotide phosphate (NHD), nicotinamide guanine dinucleotide (NGD) as substrates. Fails to cleave phosphorylated dinucleotides NADP(+), NADPH and NaADP(+). Protects against axonal degeneration following injury. May be involved in the maintenance of axonal integrity. Also functions as a stress-response chaperone protein that prevents toxic aggregation of proteins; this function may be independent of its NAD(+) synthesis activity. This Homo sapiens (Human) protein is Nicotinamide/nicotinic acid mononucleotide adenylyltransferase 3.